Here is a 193-residue protein sequence, read N- to C-terminus: MIGRIQGTLVSVHPPRLLVDCQGVGYEIDVPMSTLYQLPEVNQKITLLTHFQVREDAQQLFGFATEIEREAFRQLIKISGVGSRTALAVLSGMSVNELAQAIALQEAGRLTQVPGIGKKTAERLCLELKGKLAPDLGITGGKPQAIEATSEVLQALLSLGYSEKEALLALKQIPPETSVSDGIRMGLKYLSKP.

The segment at 1–64 (MIGRIQGTLV…EDAQQLFGFA (64 aa)) is domain I. The domain II stretch occupies residues 65-139 (TEIEREAFRQ…GKLAPDLGIT (75 aa)). Residues 139–143 (TGGKP) form a flexible linker region. A domain III region spans residues 144-193 (QAIEATSEVLQALLSLGYSEKEALLALKQIPPETSVSDGIRMGLKYLSKP).

It belongs to the RuvA family. As to quaternary structure, homotetramer. Forms an RuvA(8)-RuvB(12)-Holliday junction (HJ) complex. HJ DNA is sandwiched between 2 RuvA tetramers; dsDNA enters through RuvA and exits via RuvB. An RuvB hexamer assembles on each DNA strand where it exits the tetramer. Each RuvB hexamer is contacted by two RuvA subunits (via domain III) on 2 adjacent RuvB subunits; this complex drives branch migration. In the full resolvosome a probable DNA-RuvA(4)-RuvB(12)-RuvC(2) complex forms which resolves the HJ.

Its subcellular location is the cytoplasm. The RuvA-RuvB-RuvC complex processes Holliday junction (HJ) DNA during genetic recombination and DNA repair, while the RuvA-RuvB complex plays an important role in the rescue of blocked DNA replication forks via replication fork reversal (RFR). RuvA specifically binds to HJ cruciform DNA, conferring on it an open structure. The RuvB hexamer acts as an ATP-dependent pump, pulling dsDNA into and through the RuvAB complex. HJ branch migration allows RuvC to scan DNA until it finds its consensus sequence, where it cleaves and resolves the cruciform DNA. This Polynucleobacter asymbioticus (strain DSM 18221 / CIP 109841 / QLW-P1DMWA-1) (Polynucleobacter necessarius subsp. asymbioticus) protein is Holliday junction branch migration complex subunit RuvA.